A 261-amino-acid polypeptide reads, in one-letter code: Cytochrome c oxidase subunit 3 (261 aa).

The Mitochondrial matrix segment spans residues 1–15; sequence MTHQTHAYHMVNPSP. A helical membrane pass occupies residues 16–34; the sequence is WPLTGALSALLMTSGLTMW. Residues 35-40 lie on the Mitochondrial intermembrane side of the membrane; sequence FHFNSM. A helical transmembrane segment spans residues 41–66; sequence TLLMIGLTTNMLTMYQWWRDVIREST. Topologically, residues 67-72 are mitochondrial matrix; it reads FQGHHT. The chain crosses the membrane as a helical span at residues 73 to 105; it reads PAVQKGLRYGMILFIISEVLFFTGFFWAFYHSS. At 106–128 the chain is on the mitochondrial intermembrane side; sequence LAPTPELGGCWPPTGIHPLNPLE. The chain crosses the membrane as a helical span at residues 129-152; the sequence is VPLLNTSVLLASGVSITWAHHSLM. At 153 to 155 the chain is on the mitochondrial matrix side; it reads EGD. A helical transmembrane segment spans residues 156–183; that stretch reads RKHMLQALFITITLGVYFTLLQASEYYE. Topologically, residues 184–190 are mitochondrial intermembrane; sequence APFTISD. A helical membrane pass occupies residues 191–223; it reads GVYGSTFFVATGFHGLHVIIGSTFLIVCFFRQL. Over 224 to 232 the chain is Mitochondrial matrix; it reads KFHFTSNHH. A helical membrane pass occupies residues 233-256; the sequence is FGFEAAAWYWHFVDVVWLFLYVSI. The Mitochondrial intermembrane portion of the chain corresponds to 257-261; that stretch reads YWWGS.

Belongs to the cytochrome c oxidase subunit 3 family. As to quaternary structure, component of the cytochrome c oxidase (complex IV, CIV), a multisubunit enzyme composed of 14 subunits. The complex is composed of a catalytic core of 3 subunits MT-CO1, MT-CO2 and MT-CO3, encoded in the mitochondrial DNA, and 11 supernumerary subunits COX4I1 (or COX4I2), COX5A, COX5B, COX6A2 (or COX6A1), COX6B1 (or COX6B2), COX6C, COX7A1 (or COX7A2), COX7B, COX7C, COX8B and NDUFA4, which are encoded in the nuclear genome. The complex exists as a monomer or a dimer and forms supercomplexes (SCs) in the inner mitochondrial membrane with NADH-ubiquinone oxidoreductase (complex I, CI) and ubiquinol-cytochrome c oxidoreductase (cytochrome b-c1 complex, complex III, CIII), resulting in different assemblies (supercomplex SCI(1)III(2)IV(1) and megacomplex MCI(2)III(2)IV(2)).

The protein resides in the mitochondrion inner membrane. The enzyme catalyses 4 Fe(II)-[cytochrome c] + O2 + 8 H(+)(in) = 4 Fe(III)-[cytochrome c] + 2 H2O + 4 H(+)(out). Functionally, component of the cytochrome c oxidase, the last enzyme in the mitochondrial electron transport chain which drives oxidative phosphorylation. The respiratory chain contains 3 multisubunit complexes succinate dehydrogenase (complex II, CII), ubiquinol-cytochrome c oxidoreductase (cytochrome b-c1 complex, complex III, CIII) and cytochrome c oxidase (complex IV, CIV), that cooperate to transfer electrons derived from NADH and succinate to molecular oxygen, creating an electrochemical gradient over the inner membrane that drives transmembrane transport and the ATP synthase. Cytochrome c oxidase is the component of the respiratory chain that catalyzes the reduction of oxygen to water. Electrons originating from reduced cytochrome c in the intermembrane space (IMS) are transferred via the dinuclear copper A center (CU(A)) of subunit 2 and heme A of subunit 1 to the active site in subunit 1, a binuclear center (BNC) formed by heme A3 and copper B (CU(B)). The BNC reduces molecular oxygen to 2 water molecules using 4 electrons from cytochrome c in the IMS and 4 protons from the mitochondrial matrix. This Bos taurus (Bovine) protein is Cytochrome c oxidase subunit 3 (MT-CO3).